Reading from the N-terminus, the 77-residue chain is UPF0346 protein lin1971 (77 aa).

Belongs to the UPF0346 family.

This is UPF0346 protein lin1971 from Listeria innocua serovar 6a (strain ATCC BAA-680 / CLIP 11262).